A 273-amino-acid chain; its full sequence is Dermonecrotic toxin LsaSicTox-alphaIB1bi (273 aa).

The active site involves His-5. Mg(2+)-binding residues include Glu-25 and Asp-27. The Nucleophile role is filled by His-41. Cystine bridges form between Cys-45–Cys-51 and Cys-47–Cys-190. Asp-85 is a binding site for Mg(2+).

The protein belongs to the arthropod phospholipase D family. Class II subfamily. It depends on Mg(2+) as a cofactor. As to expression, expressed by the venom gland.

The protein localises to the secreted. The catalysed reaction is an N-(acyl)-sphingosylphosphocholine = an N-(acyl)-sphingosyl-1,3-cyclic phosphate + choline. It carries out the reaction an N-(acyl)-sphingosylphosphoethanolamine = an N-(acyl)-sphingosyl-1,3-cyclic phosphate + ethanolamine. The enzyme catalyses a 1-acyl-sn-glycero-3-phosphocholine = a 1-acyl-sn-glycero-2,3-cyclic phosphate + choline. It catalyses the reaction a 1-acyl-sn-glycero-3-phosphoethanolamine = a 1-acyl-sn-glycero-2,3-cyclic phosphate + ethanolamine. In terms of biological role, dermonecrotic toxins cleave the phosphodiester linkage between the phosphate and headgroup of certain phospholipids (sphingolipid and lysolipid substrates), forming an alcohol (often choline) and a cyclic phosphate. This toxin acts on sphingomyelin (SM). It may also act on ceramide phosphoethanolamine (CPE), lysophosphatidylcholine (LPC) and lysophosphatidylethanolamine (LPE), but not on lysophosphatidylserine (LPS), and lysophosphatidylglycerol (LPG). It acts by transphosphatidylation, releasing exclusively cyclic phosphate products as second products. Induces dermonecrosis, hemolysis, increased vascular permeability, edema, inflammatory response, and platelet aggregation. This is Dermonecrotic toxin LsaSicTox-alphaIB1bi from Loxosceles sabina (Tucson recluse spider).